Reading from the N-terminus, the 74-residue chain is Large ribosomal subunit protein uL30 (74 aa).

Belongs to the universal ribosomal protein uL30 family. As to quaternary structure, part of the 50S ribosomal subunit.

The protein is Large ribosomal subunit protein uL30 of Micrococcus luteus (strain ATCC 4698 / DSM 20030 / JCM 1464 / CCM 169 / CCUG 5858 / IAM 1056 / NBRC 3333 / NCIMB 9278 / NCTC 2665 / VKM Ac-2230) (Micrococcus lysodeikticus).